Here is a 171-residue protein sequence, read N- to C-terminus: MSSKKAKTKTKKRPQRATSNVFAMFDQSQIQEFKEAFNMIDQNRDGFIDKEDLHDMLASLGKNPTDAYLEAMMNEAPGPINFTMFLTMFGEKLNGTDPEDVIRNAFACFDEEATGTIQEDYLRELLTTMGDRFTDEEVDELYREAPIDKKGNFNYIEFTRILKHGAKDKDD.

Thr18 is subject to Phosphothreonine; by MLCK and ZIPK/DAPK3. At Ser19 the chain carries Phosphoserine; by MLCK and ZIPK/DAPK3. 3 EF-hand domains span residues 28 to 63 (SQIQEFKEAFNMIDQNRDGFIDKEDLHDMLASLGKN), 97 to 132 (DPEDVIRNAFACFDEEATGTIQEDYLRELLTTMGDR), and 133 to 168 (FTDEEVDELYREAPIDKKGNFNYIEFTRILKHGAKD). Ca(2+) contacts are provided by Asp41, Asn43, Asp45, and Asp52.

Myosin is a hexamer of 2 heavy chains and 4 light chains: interacts with myosin heavy chain MYO19. In terms of processing, phosphorylation increases the actin-activated myosin ATPase activity and thereby regulates the contractile activity. It is required to generate the driving force in the migration of the cells but not necessary for localization of myosin-2 at the leading edge. Phosphorylation is reduced following epigallocatechin-3-O-gallate treatment.

Its function is as follows. Myosin regulatory subunit that plays an important role in regulation of both smooth muscle and nonmuscle cell contractile activity via its phosphorylation. Phosphorylation triggers actin polymerization in vascular smooth muscle. Implicated in cytokinesis, receptor capping, and cell locomotion. This Bos taurus (Bovine) protein is Myosin regulatory light chain 12B (MYL12B).